The sequence spans 129 residues: Membrane protein 0 (129 aa).

The disordered stretch occupies residues 1 to 25 (MATVHYSRRPGTPPVTLTSSPSMDD). The short motif at 44–47 (PPPY) is the PPXY motif element. The chain crosses the membrane as a helical span at residues 100–120 (FLILFGILTLTAVVVAIVAVF).

It belongs to the varicellovirus ORF0 protein family. Interacts with host ITCH; this interaction probably mediates ITCH degradation.

The protein localises to the host Golgi apparatus membrane. The polypeptide is Membrane protein 0 (Homo sapiens (Human)).